The primary structure comprises 252 residues: Imidazole glycerol phosphate synthase subunit HisF (252 aa).

Residues aspartate 11 and aspartate 130 contribute to the active site.

Belongs to the HisA/HisF family. As to quaternary structure, heterodimer of HisH and HisF.

The protein resides in the cytoplasm. The enzyme catalyses 5-[(5-phospho-1-deoxy-D-ribulos-1-ylimino)methylamino]-1-(5-phospho-beta-D-ribosyl)imidazole-4-carboxamide + L-glutamine = D-erythro-1-(imidazol-4-yl)glycerol 3-phosphate + 5-amino-1-(5-phospho-beta-D-ribosyl)imidazole-4-carboxamide + L-glutamate + H(+). The protein operates within amino-acid biosynthesis; L-histidine biosynthesis; L-histidine from 5-phospho-alpha-D-ribose 1-diphosphate: step 5/9. In terms of biological role, IGPS catalyzes the conversion of PRFAR and glutamine to IGP, AICAR and glutamate. The HisF subunit catalyzes the cyclization activity that produces IGP and AICAR from PRFAR using the ammonia provided by the HisH subunit. The chain is Imidazole glycerol phosphate synthase subunit HisF from Geobacillus kaustophilus (strain HTA426).